A 208-amino-acid chain; its full sequence is Probable nicotinate-nucleotide adenylyltransferase (208 aa).

The protein belongs to the NadD family.

It catalyses the reaction nicotinate beta-D-ribonucleotide + ATP + H(+) = deamido-NAD(+) + diphosphate. The protein operates within cofactor biosynthesis; NAD(+) biosynthesis; deamido-NAD(+) from nicotinate D-ribonucleotide: step 1/1. Its function is as follows. Catalyzes the reversible adenylation of nicotinate mononucleotide (NaMN) to nicotinic acid adenine dinucleotide (NaAD). This chain is Probable nicotinate-nucleotide adenylyltransferase, found in Symbiobacterium thermophilum (strain DSM 24528 / JCM 14929 / IAM 14863 / T).